A 500-amino-acid chain; its full sequence is Serine/threonine protein phosphatase 2A 57 kDa regulatory subunit B' kappa isoform (500 aa).

The segment at 1-53 (MFKQFLSKLPRKSSKSDSGELNRSSSGPVSSPVQRSGTSGGGSGPVRSNSGKR) is disordered. Over residues 21-37 (LNRSSSGPVSSPVQRSG) the composition is skewed to polar residues.

This sequence belongs to the phosphatase 2A regulatory subunit B56 family. As to quaternary structure, PP2A consists of a common heteromeric enzyme, composed of a catalytic subunit (subunits C), a constant regulatory subunit (subunit A), and a variety of regulatory subunits such as subunits B (the R2/B/PR55/B55, R3/B''/PR72/PR130/PR59 and R5/B'/B56 families).

The protein localises to the cytoplasm. Functionally, the B regulatory subunit may modulate substrate selectivity and catalytic activity, and may also direct the localization of the catalytic enzyme to a particular subcellular compartment. The polypeptide is Serine/threonine protein phosphatase 2A 57 kDa regulatory subunit B' kappa isoform (B'KAPPA) (Arabidopsis thaliana (Mouse-ear cress)).